The following is a 309-amino-acid chain: Malate dehydrogenase (309 aa).

Residues 9–14 (GAGAVG) and aspartate 33 contribute to the NAD(+) site. Substrate-binding residues include arginine 82 and arginine 88. NAD(+)-binding positions include asparagine 95 and 118–120 (VTN). Residues asparagine 120 and arginine 151 each coordinate substrate. Residue histidine 175 is the Proton acceptor of the active site.

Belongs to the LDH/MDH superfamily. MDH type 3 family.

It catalyses the reaction (S)-malate + NAD(+) = oxaloacetate + NADH + H(+). Functionally, catalyzes the reversible oxidation of malate to oxaloacetate. In Thermomicrobium roseum (strain ATCC 27502 / DSM 5159 / P-2), this protein is Malate dehydrogenase.